Consider the following 348-residue polypeptide: Dihydroorotase (348 aa).

Positions 14 and 16 each coordinate Zn(2+). Substrate-binding positions include 16–18 and N42; that span reads HLR. Zn(2+) contacts are provided by K100, H137, and H175. K100 carries the N6-carboxylysine modification. Residue H137 participates in substrate binding. A substrate-binding site is contributed by L220. D248 contacts Zn(2+). Residue D248 is part of the active site. 2 residues coordinate substrate: H252 and A264.

It belongs to the metallo-dependent hydrolases superfamily. DHOase family. Class II DHOase subfamily. Homodimer. Requires Zn(2+) as cofactor.

The enzyme catalyses (S)-dihydroorotate + H2O = N-carbamoyl-L-aspartate + H(+). Its pathway is pyrimidine metabolism; UMP biosynthesis via de novo pathway; (S)-dihydroorotate from bicarbonate: step 3/3. Catalyzes the reversible cyclization of carbamoyl aspartate to dihydroorotate. The sequence is that of Dihydroorotase from Pseudomonas putida (strain ATCC 700007 / DSM 6899 / JCM 31910 / BCRC 17059 / LMG 24140 / F1).